The primary structure comprises 274 residues: Ribonucleoside-diphosphate reductase small chain (274 aa).

Residues Asp-70, Glu-101, and His-104 each contribute to the Fe cation site. The active site involves Tyr-108. 3 residues coordinate Fe cation: Glu-163, Glu-197, and His-200.

The protein belongs to the ribonucleoside diphosphate reductase small chain family. As to quaternary structure, heterodimer of a large and a small chain. Fe cation serves as cofactor.

It carries out the reaction a 2'-deoxyribonucleoside 5'-diphosphate + [thioredoxin]-disulfide + H2O = a ribonucleoside 5'-diphosphate + [thioredoxin]-dithiol. Its function is as follows. Ribonucleoside-diphosphate reductase holoenzyme provides the precursors necessary for viral DNA synthesis. Allows virus growth in non-dividing cells. Catalyzes the biosynthesis of deoxyribonucleotides from the corresponding ribonucleotides. The polypeptide is Ribonucleoside-diphosphate reductase small chain (Sus scrofa (Pig)).